Consider the following 179-residue polypeptide: Large ribosomal subunit protein uL5 (179 aa).

Belongs to the universal ribosomal protein uL5 family. Part of the 50S ribosomal subunit; part of the 5S rRNA/L5/L18/L25 subcomplex. Contacts the 5S rRNA and the P site tRNA. Forms a bridge to the 30S subunit in the 70S ribosome.

In terms of biological role, this is one of the proteins that bind and probably mediate the attachment of the 5S RNA into the large ribosomal subunit, where it forms part of the central protuberance. In the 70S ribosome it contacts protein S13 of the 30S subunit (bridge B1b), connecting the 2 subunits; this bridge is implicated in subunit movement. Contacts the P site tRNA; the 5S rRNA and some of its associated proteins might help stabilize positioning of ribosome-bound tRNAs. The chain is Large ribosomal subunit protein uL5 from Pectobacterium atrosepticum (strain SCRI 1043 / ATCC BAA-672) (Erwinia carotovora subsp. atroseptica).